The following is a 249-amino-acid chain: 5'-nucleotidase SurE (249 aa).

Residues D8, D9, S39, and N91 each contribute to the a divalent metal cation site.

It belongs to the SurE nucleotidase family. The cofactor is a divalent metal cation.

It is found in the cytoplasm. The enzyme catalyses a ribonucleoside 5'-phosphate + H2O = a ribonucleoside + phosphate. In terms of biological role, nucleotidase that shows phosphatase activity on nucleoside 5'-monophosphates. The polypeptide is 5'-nucleotidase SurE (Haemophilus influenzae (strain 86-028NP)).